The following is a 474-amino-acid chain: Chromosomal replication initiator protein DnaA (474 aa).

Residues 1–91 are domain I, interacts with DnaA modulators; that stretch reads MSEELWQRCL…STRASTPAAS (91 aa). The interval 89 to 138 is disordered; that stretch reads AASYFNGSSSSSSNGPITTPAAAPAPRQPESDSRPQPTSLGGARKHRSNL. Residues 91-136 form a domain II region; the sequence is SYFNGSSSSSSNGPITTPAAAPAPRQPESDSRPQPTSLGGARKHRS. The span at 96–113 shows a compositional bias: low complexity; the sequence is SSSSSSNGPITTPAAAPA. The domain III, AAA+ region stretch occupies residues 137–354; that stretch reads NLNTGFTFST…GALRRVIAHV (218 aa). Residues Gly182, Gly184, Lys185, and Thr186 each coordinate ATP. The domain IV, binds dsDNA stretch occupies residues 355–474; it reads RFTGAQIDIG…YLNLLRTLTS (120 aa).

This sequence belongs to the DnaA family. As to quaternary structure, oligomerizes as a right-handed, spiral filament on DNA at oriC.

The protein resides in the cytoplasm. Plays an essential role in the initiation and regulation of chromosomal replication. ATP-DnaA binds to the origin of replication (oriC) to initiate formation of the DNA replication initiation complex once per cell cycle. Binds the DnaA box (a 9 base pair repeat at the origin) and separates the double-stranded (ds)DNA. Forms a right-handed helical filament on oriC DNA; dsDNA binds to the exterior of the filament while single-stranded (ss)DNA is stabiized in the filament's interior. The ATP-DnaA-oriC complex binds and stabilizes one strand of the AT-rich DNA unwinding element (DUE), permitting loading of DNA polymerase. After initiation quickly degrades to an ADP-DnaA complex that is not apt for DNA replication. Binds acidic phospholipids. The polypeptide is Chromosomal replication initiator protein DnaA (Alcanivorax borkumensis (strain ATCC 700651 / DSM 11573 / NCIMB 13689 / SK2)).